The sequence spans 87 residues: Mitochondrial import inner membrane translocase subunit TIM8 (87 aa).

Positions 44–68 match the Twin CX3C motif motif; the sequence is CFKNCISNVQNADLSSQEEQCLNNC. 2 disulfides stabilise this stretch: Cys-44-Cys-68 and Cys-48-Cys-64.

This sequence belongs to the small Tim family. Heterohexamer; composed of 3 copies of TIM8 and 3 copies of TIM13, named soluble 70 kDa complex. Associates with the TIM22 complex, whose core is composed of TIM22 and TIM54. Interacts with the transmembrane regions of multi-pass transmembrane proteins in transit.

It localises to the mitochondrion inner membrane. Functionally, mitochondrial intermembrane chaperone that participates in the import and insertion of some multi-pass transmembrane proteins into the mitochondrial inner membrane. Also required for the transfer of beta-barrel precursors from the TOM complex to the sorting and assembly machinery (SAM complex) of the outer membrane. Acts as a chaperone-like protein that protects the hydrophobic precursors from aggregation and guide them through the mitochondrial intermembrane space. The TIM8-TIM13 complex is non essential and only mediates the import of few proteins, while the predominant TIM9-TIM10 70 kDa complex is crucial and mediates the import of much more proteins. The protein is Mitochondrial import inner membrane translocase subunit TIM8 (TIM8) of Kluyveromyces lactis (strain ATCC 8585 / CBS 2359 / DSM 70799 / NBRC 1267 / NRRL Y-1140 / WM37) (Yeast).